Consider the following 198-residue polypeptide: Protein-L-isoaspartate O-methyltransferase (198 aa).

Ser-50 is an active-site residue.

This sequence belongs to the methyltransferase superfamily. L-isoaspartyl/D-aspartyl protein methyltransferase family.

It is found in the cytoplasm. It catalyses the reaction [protein]-L-isoaspartate + S-adenosyl-L-methionine = [protein]-L-isoaspartate alpha-methyl ester + S-adenosyl-L-homocysteine. In terms of biological role, catalyzes the methyl esterification of L-isoaspartyl residues in peptides and proteins that result from spontaneous decomposition of normal L-aspartyl and L-asparaginyl residues. It plays a role in the repair and/or degradation of damaged proteins. This Thermosipho melanesiensis (strain DSM 12029 / CIP 104789 / BI429) protein is Protein-L-isoaspartate O-methyltransferase.